The sequence spans 97 residues: Mapk-regulated corepressor-interacting protein 1 (97 aa).

2 disordered regions span residues 1 to 29 (MTSSPVSRVVYNGKRPASNTRSPSSNEIF) and 72 to 97 (SNSLKSFKPIDLNDLKRRTVQDPKKS). Residues 17–28 (ASNTRSPSSNEI) are compositionally biased toward polar residues. Over residues 82–97 (DLNDLKRRTVQDPKKS) the composition is skewed to basic and acidic residues.

This sequence belongs to the MCRIP family.

The protein resides in the nucleus. It is found in the cytoplasm. Its subcellular location is the stress granule. May play a role in the regulation of the epithelial-mesenchymal transition. The chain is Mapk-regulated corepressor-interacting protein 1 (Mcrip1) from Xenopus tropicalis (Western clawed frog).